We begin with the raw amino-acid sequence, 464 residues long: Citrate synthase, mitochondrial (464 aa).

A mitochondrion-targeting transit peptide spans 1 to 27; it reads MALLTAAARLFGAKNASCLVLAARHAS. Residues 2–21 carry the SIFI-degron motif; the sequence is ALLTAAARLFGAKNASCLVL. N6-acetyllysine; alternate is present on lysine 76. At lysine 76 the chain carries N6-succinyllysine; alternate. An N6-succinyllysine mark is found at lysine 103 and lysine 193. Position 226 is a phosphoserine (serine 226). Histidine 301 is a catalytic residue. 2 positions are modified to N6-acetyllysine; alternate: lysine 321 and lysine 327. Residues lysine 321 and lysine 327 each carry the N6-succinyllysine; alternate modification. The active site involves histidine 347. Arginine 356 contacts oxaloacetate. Lysine 375 is modified (N6-acetyllysine; alternate). The residue at position 375 (lysine 375) is an N6-succinyllysine; alternate. The residue at position 382 (lysine 382) is an N6-acetyllysine. N6-acetyllysine; alternate is present on lysine 393. Lysine 393 carries the post-translational modification N6-succinyllysine; alternate. Lysine 395 is subject to N6,N6,N6-trimethyllysine. Aspartate 402 is an active-site residue. Positions 428 and 448 each coordinate oxaloacetate. Lysine 450 bears the N6-succinyllysine mark. Position 459 is an N6-acetyllysine; alternate (lysine 459). An N6-succinyllysine; alternate modification is found at lysine 459.

It belongs to the citrate synthase family. In terms of assembly, homodimer. In terms of processing, methylated. Trimethylation at Lys-395 by CSKMT decreases citrate synthase activity. Post-translationally, in response to mitochondrial stress, the precursor protein is ubiquitinated by the SIFI complex in the cytoplasm before mitochondrial import, leading to its degradation. Within the SIFI complex, UBR4 initiates ubiquitin chain that are further elongated or branched by KCMF1.

It is found in the mitochondrion matrix. It carries out the reaction oxaloacetate + acetyl-CoA + H2O = citrate + CoA + H(+). It participates in carbohydrate metabolism; tricarboxylic acid cycle; isocitrate from oxaloacetate: step 1/2. In terms of biological role, key enzyme of the Krebs tricarboxylic acid cycle which catalyzes the synthesis of citrate from acetyl coenzyme A and oxaloacetate. This chain is Citrate synthase, mitochondrial (CS), found in Sus scrofa (Pig).